The sequence spans 323 residues: Annexin A3 (323 aa).

The residue at position 2 (alanine 2) is an N-acetylalanine. Annexin repeat units follow at residues 18–89 (FSPS…ALVT), 90–161 (PPAV…TLAD), 173–245 (HLAK…AIVN), and 249–320 (NTPA…KICG). Position 267 is a phosphothreonine (threonine 267).

This sequence belongs to the annexin family.

Functionally, inhibitor of phospholipase A2, also possesses anti-coagulant properties. Also cleaves the cyclic bond of inositol 1,2-cyclic phosphate to form inositol 1-phosphate. The sequence is that of Annexin A3 (ANXA3) from Homo sapiens (Human).